We begin with the raw amino-acid sequence, 345 residues long: uncharacterized protein (345 aa).

The CNNM transmembrane domain occupies 1–198 (MDVLSAVLLA…LSEGLLDHEE (198 aa)). Helical transmembrane passes span 3 to 23 (VLSAVLLALLLIGANAFFVGA) and 95 to 115 (VPPALLHTLSLAIVVALHVLL). 2 consecutive CBS domains span residues 217–280 (AVPL…PQTV) and 285–342 (VVRP…MRDG). Residues 312 to 332 (LALVTADNGSVVGMVALEDVV) traverse the membrane as a helical segment.

The protein belongs to the TerC family.

The protein resides in the cell membrane. This is an uncharacterized protein from Mycobacterium tuberculosis (strain ATCC 25618 / H37Rv).